The primary structure comprises 120 residues: Large ribosomal subunit protein bL19 (120 aa).

The protein belongs to the bacterial ribosomal protein bL19 family.

Functionally, this protein is located at the 30S-50S ribosomal subunit interface and may play a role in the structure and function of the aminoacyl-tRNA binding site. This chain is Large ribosomal subunit protein bL19, found in Thermodesulfovibrio yellowstonii (strain ATCC 51303 / DSM 11347 / YP87).